A 137-amino-acid chain; its full sequence is Large ribosomal subunit protein uL16 (137 aa).

It belongs to the universal ribosomal protein uL16 family. As to quaternary structure, part of the 50S ribosomal subunit.

Its function is as follows. Binds 23S rRNA and is also seen to make contacts with the A and possibly P site tRNAs. The sequence is that of Large ribosomal subunit protein uL16 from Wolbachia pipientis wMel.